The chain runs to 426 residues: Serine/threonine-protein kinase SRPK (426 aa).

Over residues M1 to D23 the composition is skewed to basic and acidic residues. Residues M1–K40 are disordered. Acidic residues predominate over residues S24 to T35. The region spanning Y56–M419 is the Protein kinase domain. Residues L62–V70 and K86 each bind ATP. D188 acts as the Proton acceptor in catalysis. Residues P318 to D328 carry the Nuclear localization signal motif.

This sequence belongs to the protein kinase superfamily. CMGC Ser/Thr protein kinase family.

Its subcellular location is the nucleus. The enzyme catalyses L-seryl-[protein] + ATP = O-phospho-L-seryl-[protein] + ADP + H(+). It carries out the reaction L-threonyl-[protein] + ATP = O-phospho-L-threonyl-[protein] + ADP + H(+). Phosphorylates serine/arginine-rich protein PSR. The protein is Serine/threonine-protein kinase SRPK of Physarum polycephalum (Slime mold).